Consider the following 222-residue polypeptide: Charged multivesicular body protein 2a (222 aa).

Methionine 1 carries the N-acetylmethionine modification. Residues 12-53 adopt a coiled-coil conformation; that stretch reads EELLRQNQRALNRAMRELDRERQKLETQEKKIIADIKKMAKQ. Positions 56-222 are interaction with VPS4B; sequence MDAVRIMAKD…EERLKNLRRD (167 aa). Serine 184 is modified (phosphoserine). Threonine 185 is modified (phosphothreonine). A phosphoserine mark is found at serine 188, serine 190, and serine 203. The stretch at 195–222 forms a coiled coil; it reads GKKAEAAASALADADADLEERLKNLRRD. Positions 210–220 match the MIT-interacting motif motif; that stretch reads ADLEERLKNLR. The interval 217–222 is interaction with VTA1; it reads KNLRRD.

The protein belongs to the SNF7 family. Probable core component of the endosomal sorting required for transport complex III (ESCRT-III). ESCRT-III components are thought to multimerize to form a flat lattice on the perimeter membrane of the endosome. Several assembly forms of ESCRT-III may exist that interact and act sequentially. In vitro, heteromerizes with CHMP3 (but not CHMP4) to form helical tubular structures that expose membrane-interacting sites on the outside whereas VPS4B can associate on the inside of the tubule. Interacts with CHMP1B, CHMP2B, CHMP3, CHMP4A, CHMP4B, CHMP4C and CHMP5. Interacts with VPS4A; the interaction is direct. Interacts with VPS4B; the interaction is direct. Interacts with MITD1. Interacts with VTA1; the interaction probably involves the open conformation of CHMP2A. ISGylated in a CHMP5-dependent manner. Isgylation weakens and inhibits its interactions with VPS4A and VTA1 respectively.

It is found in the late endosome membrane. It localises to the nucleus envelope. In terms of biological role, probable core component of the endosomal sorting required for transport complex III (ESCRT-III) which is involved in multivesicular bodies (MVBs) formation and sorting of endosomal cargo proteins into MVBs. MVBs contain intraluminal vesicles (ILVs) that are generated by invagination and scission from the limiting membrane of the endosome and mostly are delivered to lysosomes enabling degradation of membrane proteins, such as stimulated growth factor receptors, lysosomal enzymes and lipids. The MVB pathway appears to require the sequential function of ESCRT-O, -I,-II and -III complexes. ESCRT-III proteins mostly dissociate from the invaginating membrane before the ILV is released. The ESCRT machinery also functions in topologically equivalent membrane fission events, such as the terminal stages of cytokinesis. Together with SPAST, the ESCRT-III complex promotes nuclear envelope sealing and mitotic spindle disassembly during late anaphase. Recruited to the reforming nuclear envelope (NE) during anaphase by LEMD2. ESCRT-III proteins are believed to mediate the necessary vesicle extrusion and/or membrane fission activities, possibly in conjunction with the AAA ATPase VPS4. (Microbial infection) The ESCRT machinery functions in topologically equivalent membrane fission events, such as the budding of enveloped viruses (HIV-1 and other lentiviruses). Involved in HIV-1 p6- and p9-dependent virus release. The polypeptide is Charged multivesicular body protein 2a (CHMP2A) (Homo sapiens (Human)).